Consider the following 765-residue polypeptide: MGPLQGDGGPALGGADVAPRLSPVRVWPRPQAPKEPALHPMGLSLPKEKGLILCLWSKFCRWFQRRESWAQSRDEQNLLQQKRIWESPLLLAAKDNDVQALNKLLKYEDCKVHQRGAMGETALHIAALYDNLEAAMVLMEAAPELVFEPMTSELYEGQTALHIAVVNQNMNLVRALLARRASVSARATGTAFRRSPCNLIYFGEHPLSFAACVNSEEIVRLLIEHGADIRAQDSLGNTVLHILILQPNKTFACQMYNLLLSYDRHGDHLQPLDLVPNHQGLTPFKLAGVEGNTVMFQHLMQKRKHTQWTYGPLTSTLYDLTEIDSSGDEQSLLELIITTKKREARQILDQTPVKELVSLKWKRYGRPYFCMLGAIYLLYIICFTMCCIYRPLKPRTNNRTSPRDNTLLQQKLLQEAYMTPKDDIRLVGELVTVIGAIIILLVEVPDIFRMGVTRFFGQTILGGPFHVLIITYAFMVLVTMVMRLISASGEVVPMSFALVLGWCNVMYFARGFQMLGPFTIMIQKMIFGDLMRFCWLMAVVILGFASAFYIIFQTEDPEELGHFYDYPMALFSTFELFLTIIDGPANYNVDLPFMYSITYAAFAIIATLLMLNLLIAMMGDTHWRVAHERDELWRAQIVATTVMLERKLPRCLWPRSGICGREYGLGDRWFLRVEDRQDLNRQRIQRYAQAFHTRGSEDLDKDSVEKLELGCPFSPHLSLPMPSVSRSTSRSSANWERLRQGTLRRDLRGIINRGLEDGESWEYQI.

Residues Met-1–Pro-367 are Cytoplasmic-facing. ANK repeat units follow at residues Ile-84–Gln-114, Met-118–Phe-147, and Glu-156–Ala-185. The tract at residues Glu-133–Pro-143 is interaction with calmodulin. Phosphotyrosine; by SRC is present on Tyr-201. ANK repeat units lie at residues Phe-202–Ala-231, Leu-235–Asn-277, and Gln-279–Trp-308. A helical membrane pass occupies residues Tyr-368–Ile-388. Residues Tyr-389–Arg-425 lie on the Extracellular side of the membrane. The N-linked (GlcNAc...) asparagine glycan is linked to Asn-398. Residues Leu-426 to Phe-448 form a helical membrane-spanning segment. Residues Arg-449–Gly-463 lie on the Cytoplasmic side of the membrane. Residues Pro-464–Arg-483 traverse the membrane as a helical segment. The Extracellular segment spans residues Leu-484–Gly-489. Residues Glu-490–Ala-509 form a helical membrane-spanning segment. The Cytoplasmic segment spans residues Arg-510–Asp-529. A helical transmembrane segment spans residues Leu-530–Phe-552. Residues Gln-553–Asp-565 are Extracellular-facing. The pore-forming intramembrane region spans Tyr-566 to Ala-585. The Selectivity filter signature appears at Ile-581–Ala-585. Asp-582 serves as a coordination point for Ca(2+). Residues Asn-586–Ser-596 lie on the Extracellular side of the membrane. Residues Ile-597–Met-617 form a helical membrane-spanning segment. The Cytoplasmic portion of the chain corresponds to Met-618–Ile-765. An interaction with S100A10 region spans residues Val-638 to Val-642. The interaction with calmodulin stretch occupies residues Ser-731–Ile-751. Thr-742 is modified (phosphothreonine; by PKC/PRKCA).

The protein belongs to the transient receptor (TC 1.A.4) family. TrpV subfamily. TRPV6 sub-subfamily. As to quaternary structure, homotetramer. Probably also forms heterotetramers with TRPV5. Interacts with TRPV5. Interacts with S100A10 and probably with the ANAX2-S100A10 heterotetramer. The interaction with S100A10 is required for the trafficking to the plasma membrane. Interacts with BSPRY. Interacts with TCAF1 and TCAF2 isoform 2. Interacts with calmodulin. In terms of processing, glycosylated. Phosphorylation at Tyr-201 by SRC leads to an increased calcium influx through the channel. Probably dephosphorylated at this site by PTPN1. Phosphorylation by PRKCA at the calmodulin binding site delays channel inactivation. As to expression, expressed at high levels in the gastrointestinal tract, including esophagus, stomach, duodenum, jejunum, ileum and colon, and in pancreas, placenta, prostate and salivary gland. Expressed at moderate levels in liver, kidney and testis. Expressed in trophoblasts of placenta villus trees (at protein level). Expressed in locally advanced prostate cancer, metastatic and androgen-insensitive prostatic lesions but not detected in healthy prostate tissue and benign prostatic hyperplasia.

It localises to the cell membrane. It catalyses the reaction Ca(2+)(in) = Ca(2+)(out). Calcium selective cation channel that mediates Ca(2+) uptake in various tissues, including the intestine. Important for normal Ca(2+) ion homeostasis in the body, including bone and skin. The channel is activated by low internal calcium level, probably including intracellular calcium store depletion, and the current exhibits an inward rectification. Inactivation includes both a rapid Ca(2+)-dependent and a slower Ca(2+)-calmodulin-dependent mechanism; the latter may be regulated by phosphorylation. In vitro, is slowly inhibited by Mg(2+) in a voltage-independent manner. Heteromeric assembly with TRPV5 seems to modify channel properties. TRPV5-TRPV6 heteromultimeric concatemers exhibit voltage-dependent gating. This chain is Transient receptor potential cation channel subfamily V member 6 (TRPV6), found in Homo sapiens (Human).